Here is a 278-residue protein sequence, read N- to C-terminus: Complement component 1 Q subcomponent-binding protein, mitochondrial (278 aa).

The transit peptide at 1–70 (MFQLLRCVPR…PCACGCGCSG (70 aa)) directs the protein to the mitochondrion. The tract at residues 73 to 90 (TEGDKAFVDFLSDEIKEE) is C1q binding. Ser84 carries the phosphoserine modification. 2 positions are modified to N6-acetyllysine: Lys88 and Lys91. Positions 136–164 (IPPAFGGEEEEPSQGQKAEEQEPELTSTP) are disordered. The tract at residues 166 to 209 (FVVEVTKDGSSKALVLDCHYPEDEIGQEDDQSDIFSIKEVSFQA) is interaction with MAVS. Tyr185 is subject to Phosphotyrosine. 2 positions are modified to phosphoserine: Ser197 and Ser201. A Phosphothreonine modification is found at Thr210.

The protein belongs to the MAM33 family. As to quaternary structure, homotrimer; three monomers form a donut-shaped structure with an unusually asymmetric charge distribution on the surface. Interacts with CDK13, HRK, VTN, NFYB, ADRA1B, FOXC1, DDX21, DDX50, NCL, SRSF1 and SRSF9. Interacts with CD93; the association may represent a cell surface C1q receptor. Interacts with KRT1; the association represents a cell surface kininogen receptor. Interacts with CD209; the interaction is indicative for a C1q:C1QBP:CD209 signaling complex. Interacts with FBL and RRP1; the respective interactions with C1QBP are competitive. Probably associates with the mitoribosome. Interacts with MAVS; the interaction occurs upon viral transfection. Interacts with PPIF. Interacts with U2AF1L4. Interacts with PLEKHN1. Interacts with VGF-derived peptide TLQP-21. Interacts with MRE11 and RAD50; forming the MRC (MRE11-RAD50-C1QBP) complex that inhibits the activity of MRE11.

Its subcellular location is the mitochondrion matrix. The protein resides in the nucleus. It localises to the cell membrane. The protein localises to the secreted. It is found in the cytoplasm. Its subcellular location is the nucleolus. Its function is as follows. Multifunctional and multicompartmental protein involved in inflammation and infection processes, ribosome biogenesis, protein synthesis in mitochondria, regulation of apoptosis, transcriptional regulation and pre-mRNA splicing. At the cell surface is thought to act as an endothelial receptor for plasma proteins of the complement and kallikrein-kinin cascades. Putative receptor for C1q; specifically binds to the globular 'heads' of C1q thus inhibiting C1; may perform the receptor function through a complex with C1qR/CD93. In complex with cytokeratin-1/KRT1 is a high affinity receptor for kininogen-1/HMWK. Can also bind other plasma proteins, such as coagulation factor XII leading to its autoactivation. May function to bind initially fluid kininogen-1 to the cell membrane. The secreted form may enhance both extrinsic and intrinsic coagulation pathways. It is postulated that the cell surface form requires docking with transmembrane proteins for downstream signaling which might be specific for a cell-type or response. By acting as C1q receptor is involved in chemotaxis of immature dendritic cells and neutrophils and is proposed to signal through CD209/DC-SIGN on immature dendritic cells, through integrin alpha-4/beta-1 during trophoblast invasion of the decidua, and through integrin beta-1 during endothelial cell adhesion and spreading. Signaling involved in inhibition of innate immune response is implicating the PI3K-AKT/PKB pathway. Required for protein synthesis in mitochondria. In mitochondrial translation may be involved in formation of functional 55S mitoribosomes; the function seems to involve its RNA-binding activity. Acts as a RNA modification reader, which specifically recognizes and binds mitochondrial RNAs modified by C5-methylcytosine (m5C) in response to stress, and promotes recruitment of the mitochondrial degradosome complex, leading to their degradation. May be involved in the nucleolar ribosome maturation process; the function may involve the exchange of FBL for RRP1 in the association with pre-ribosome particles. Involved in regulation of RNA splicing by inhibiting the RNA-binding capacity of SRSF1 and its phosphorylation. Is required for the nuclear translocation of splicing factor U2AF1L4. Involved in regulation of CDKN2A- and HRK-mediated apoptosis. Stabilizes mitochondrial CDKN2A isoform smARF. May be involved in regulation of FOXC1 transcriptional activity and NFY/CCAAT-binding factor complex-mediated transcription. May play a role in antibacterial defense as it can bind to cell surface hyaluronan and inhibit Streptococcus pneumoniae hyaluronate lyase. May be involved in modulation of the immune response; ligation by HCV core protein is resulting in suppression of interleukin-12 production in monocyte-derived dendritic cells. Involved in regulation of antiviral response by inhibiting RIGI- and IFIH1-mediated signaling pathways probably involving its association with MAVS after viral infection. Acts as a regulator of DNA repair via homologous recombination by inhibiting the activity of MRE11: interacts with unphosphorylated MRE11 and RAD50 in absence of DNA damage, preventing formation and activity of the MRN complex. Following DNA damage, dissociates from phosphorylated MRE11, allowing formation of the MRN complex. The polypeptide is Complement component 1 Q subcomponent-binding protein, mitochondrial (C1QBP) (Bos taurus (Bovine)).